The sequence spans 104 residues: Nucleoid-associated protein Bsph_0039 (104 aa).

Positions 1 to 12 (MRGMGNMQGMMK) are enriched in low complexity. The segment at 1–22 (MRGMGNMQGMMKKMQKMQKEMM) is disordered.

This sequence belongs to the YbaB/EbfC family. Homodimer.

It is found in the cytoplasm. It localises to the nucleoid. In terms of biological role, binds to DNA and alters its conformation. May be involved in regulation of gene expression, nucleoid organization and DNA protection. The protein is Nucleoid-associated protein Bsph_0039 of Lysinibacillus sphaericus (strain C3-41).